A 113-amino-acid chain; its full sequence is Large ribosomal subunit protein bL19 (113 aa).

The protein belongs to the bacterial ribosomal protein bL19 family.

In terms of biological role, this protein is located at the 30S-50S ribosomal subunit interface and may play a role in the structure and function of the aminoacyl-tRNA binding site. The sequence is that of Large ribosomal subunit protein bL19 from Corynebacterium urealyticum (strain ATCC 43042 / DSM 7109).